Here is a 22-residue protein sequence, read N- to C-terminus: Putative lactoylglutathione lyase (22 aa).

The interval 1-22 is disordered; sequence ITACLDPDGWKEPGPLPGISTK. Glutamate 12 acts as the Proton donor/acceptor in catalysis.

It belongs to the glyoxalase I family. Zn(2+) is required as a cofactor.

It catalyses the reaction (R)-S-lactoylglutathione = methylglyoxal + glutathione. The protein operates within secondary metabolite metabolism; methylglyoxal degradation; (R)-lactate from methylglyoxal: step 1/2. In terms of biological role, catalyzes the conversion of hemimercaptal, formed from methylglyoxal and glutathione, to S-lactoylglutathione. The chain is Putative lactoylglutathione lyase from Pinus strobus (Eastern white pine).